The sequence spans 282 residues: Putative 4-diphosphocytidyl-2-C-methyl-D-erythritol kinase (282 aa).

Lysine 10 is a catalytic residue. An ATP-binding site is contributed by 94–104 (PICAGLGGGSS). Aspartate 136 is a catalytic residue.

It belongs to the GHMP kinase family. IspE subfamily.

The enzyme catalyses 4-CDP-2-C-methyl-D-erythritol + ATP = 4-CDP-2-C-methyl-D-erythritol 2-phosphate + ADP + H(+). In terms of biological role, catalyzes the phosphorylation of the position 2 hydroxy group of 4-diphosphocytidyl-2C-methyl-D-erythritol. The sequence is that of Putative 4-diphosphocytidyl-2-C-methyl-D-erythritol kinase (ipk) from Streptococcus mutans serotype c (strain ATCC 700610 / UA159).